Consider the following 127-residue polypeptide: Trefoil factor 2 (127 aa).

The first 21 residues, 1 to 21, serve as a signal peptide directing secretion; it reads EPQRPAPGHPPPAGAVCLTGA. Gln-22 is modified (pyrrolidone carboxylic acid). 2 consecutive P-type domains span residues 27-71 and 77-120; these read CRCS…FKPL and EECV…FFPM. 7 disulfides stabilise this stretch: Cys-27-Cys-125, Cys-29-Cys-56, Cys-40-Cys-55, Cys-50-Cys-67, Cys-79-Cys-105, Cys-89-Cys-104, and Cys-99-Cys-116.

As to expression, found in pancreas.

The protein localises to the secreted. In terms of biological role, inhibits gastrointestinal motility and gastric acid secretion. Could function as a structural component of gastric mucus, possibly by stabilizing glycoproteins in the mucus gel through interactions with carbohydrate side chains. The protein is Trefoil factor 2 (TFF2) of Sus scrofa (Pig).